The following is a 522-amino-acid chain: 2-isopropylmalate synthase (522 aa).

Positions Val5 to His267 constitute a Pyruvate carboxyltransferase domain. Residues Asp14, His202, His204, and Asn238 each contribute to the Mn(2+) site. The regulatory domain stretch occupies residues Gln392–Val522.

It belongs to the alpha-IPM synthase/homocitrate synthase family. LeuA type 1 subfamily. In terms of assembly, homodimer. Mn(2+) is required as a cofactor.

It is found in the cytoplasm. It catalyses the reaction 3-methyl-2-oxobutanoate + acetyl-CoA + H2O = (2S)-2-isopropylmalate + CoA + H(+). The protein operates within amino-acid biosynthesis; L-leucine biosynthesis; L-leucine from 3-methyl-2-oxobutanoate: step 1/4. In terms of biological role, catalyzes the condensation of the acetyl group of acetyl-CoA with 3-methyl-2-oxobutanoate (2-ketoisovalerate) to form 3-carboxy-3-hydroxy-4-methylpentanoate (2-isopropylmalate). The polypeptide is 2-isopropylmalate synthase (Shewanella sp. (strain MR-4)).